The primary structure comprises 674 residues: U-box domain-containing protein 16 (674 aa).

The U-box domain occupies 273-347 (NIPADFRCPI…VLWCRDQKIP (75 aa)). ARM repeat units lie at residues 399 to 438 (TVARACIAEAGAIPKLVRYLATECPSLQINAVTTILNLSI), 441 to 481 (QNKT…SLAG), and 484 to 523 (AYRRRLGRKARVVSGLVDLAKQGPTSSKRDALVAILNLVA).

The enzyme catalyses S-ubiquitinyl-[E2 ubiquitin-conjugating enzyme]-L-cysteine + [acceptor protein]-L-lysine = [E2 ubiquitin-conjugating enzyme]-L-cysteine + N(6)-ubiquitinyl-[acceptor protein]-L-lysine.. The protein operates within protein modification; protein ubiquitination. Functions as an E3 ubiquitin ligase. In Arabidopsis thaliana (Mouse-ear cress), this protein is U-box domain-containing protein 16 (PUB16).